We begin with the raw amino-acid sequence, 282 residues long: F-box protein VBF (282 aa).

One can recognise an F-box domain in the interval 1–44 (MMMLPEACIANILAFTSPADAFSSSEVSSVFRLAGDSDFVWEKF).

As to quaternary structure, component of SCF(VBF) E3 ubiquitin ligase complex that interacts with VIP1. Interacts directly with SKP1A and VIP1. Forms a complex composed of VIP1, VBF and Agrobacterium virE2.

In terms of biological role, component of SCF(VBF) E3 ubiquitin ligase complexes, which mediate the ubiquitination and subsequent proteasomal degradation of target proteins such as VIP1 and Agrobacterium virE2, after their implication in T-DNA translocation to the host nucleus (can functionally replace Agrobacterium VirF). Required during Agrobacterium-induced tumor formation. The chain is F-box protein VBF (VBF) from Arabidopsis thaliana (Mouse-ear cress).